The chain runs to 194 residues: ATP-dependent Clp protease proteolytic subunit (194 aa).

Catalysis depends on Ser98, which acts as the Nucleophile. The active site involves His123.

This sequence belongs to the peptidase S14 family. In terms of assembly, fourteen ClpP subunits assemble into 2 heptameric rings which stack back to back to give a disk-like structure with a central cavity, resembling the structure of eukaryotic proteasomes.

The protein localises to the cytoplasm. It carries out the reaction Hydrolysis of proteins to small peptides in the presence of ATP and magnesium. alpha-casein is the usual test substrate. In the absence of ATP, only oligopeptides shorter than five residues are hydrolyzed (such as succinyl-Leu-Tyr-|-NHMec, and Leu-Tyr-Leu-|-Tyr-Trp, in which cleavage of the -Tyr-|-Leu- and -Tyr-|-Trp bonds also occurs).. In terms of biological role, cleaves peptides in various proteins in a process that requires ATP hydrolysis. Has a chymotrypsin-like activity. Plays a major role in the degradation of misfolded proteins. In Clostridium kluyveri (strain NBRC 12016), this protein is ATP-dependent Clp protease proteolytic subunit.